The chain runs to 550 residues: MTPADLATLIKETAVEVLTSRELDTSVLPEQVVVERPRNPEHGDYATNIALQVAKKVGQNPRDLATWLAEALAADDAIDSAEIAGPGFLNIRLAAAAQGEIVAKILAQGETFGNSDHLSHLDVNLEFVSANPTGPIHLGGTRWAAVGDSLGRVLEASGAKVTREYYFNDHGRQIDRFALSLLAAAKGEPTPEDGYGGEYIKEIAEAIVEKHPEALALEPAATQELFRAEGVEMMFEHIKSSLHEFGTDFDVYYHENSLFESGAVDKAVQVLKDNGNLYENEGAWWLRSTEFGDDKDRVVIKSDGDAAYIAGDIAYVADKFSRGHNLNIYMLGADHHGYIARLKAAAAALGYKPEGVEVLIGQMVNLLRDGKAVRMSKRAGTVVTLDDLVEAIGIDAARYSLIRSSVDSSLDIDLGLWESQSSDNPVYYVQYGHARLCSIARKAETLGVTEEGADLSLLTHDREGDLIRTLGEFPAVVKAAADLREPHRIARYAEELAGTFHRFYDSCHILPKADEDTAPIHSARLALAAATRQTLANALHLVGVSAPEKM.

A 'HIGH' region motif is present at residues 130–140 (ANPTGPIHLGG).

The protein belongs to the class-I aminoacyl-tRNA synthetase family. In terms of assembly, monomer.

It localises to the cytoplasm. The enzyme catalyses tRNA(Arg) + L-arginine + ATP = L-arginyl-tRNA(Arg) + AMP + diphosphate. This Corynebacterium glutamicum (strain R) protein is Arginine--tRNA ligase.